The chain runs to 483 residues: Jacalin-related lectin 13 (483 aa).

The interval 1-20 (MTQKLESVGSERKSSEYMWD) is disordered. Jacalin-type lectin domains are found at residues 2–147 (TQKL…YVTW), 150–295 (PARM…YFTT), and 307–461 (FREK…YFFP).

It belongs to the jacalin lectin family.

The protein is Jacalin-related lectin 13 (JAL13) of Arabidopsis thaliana (Mouse-ear cress).